A 385-amino-acid polypeptide reads, in one-letter code: MNIKLPPFIELFRQLIATPSISATDISIDQSNESLINLLASWLKEIGFEIEIQPVPETLGKYNLLATLGRGPGGLLLCGHTDTVPFDEGLWTKDPFTLTERDNKLYGLGTADMKGFFAFIIDALRDIDVSKITRPLYILATADEETTMAGARYFAASTTIRPDFAIIGEPTSLHPICAHKGHLSNAIRIVGQSGHSSDPDRGINAIDLMHESIGHLIELRNTLKEHYNNPAFTIPYPTMNFGYIHGGDAVNRICAHCELHMDIRPLPGLTLQDLNGLLNEALEPMKQRWPGRLTIDELHSPIPGYECPTDHKMVDVIEKLLGRKAETVNYCTEAPFIQKVCPTLVLGPGSIEQAHQPDEFIDMSFIGPTRKIISQLIDHFCLSNN.

Histidine 80 lines the Zn(2+) pocket. Aspartate 82 is an active-site residue. Aspartate 112 provides a ligand contact to Zn(2+). Residue glutamate 144 is the Proton acceptor of the active site. Residues glutamate 145, glutamate 169, and histidine 355 each contribute to the Zn(2+) site.

This sequence belongs to the peptidase M20A family. ArgE subfamily. Homodimer. The cofactor is Zn(2+). It depends on Co(2+) as a cofactor. Requires glutathione as cofactor.

The protein resides in the cytoplasm. The catalysed reaction is N(2)-acetyl-L-ornithine + H2O = L-ornithine + acetate. It functions in the pathway amino-acid biosynthesis; L-arginine biosynthesis; L-ornithine from N(2)-acetyl-L-ornithine (linear): step 1/1. Its function is as follows. Catalyzes the hydrolysis of the amide bond of N(2)-acetylated L-amino acids. Cleaves the acetyl group from N-acetyl-L-ornithine to form L-ornithine, an intermediate in L-arginine biosynthesis pathway, and a branchpoint in the synthesis of polyamines. The chain is Acetylornithine deacetylase from Photorhabdus laumondii subsp. laumondii (strain DSM 15139 / CIP 105565 / TT01) (Photorhabdus luminescens subsp. laumondii).